We begin with the raw amino-acid sequence, 134 residues long: Methylglyoxal synthase (134 aa).

In terms of domain architecture, MGS-like spans Met-1 to Lys-134. Residues His-11, Lys-15, and Thr-37–Thr-40 contribute to the substrate site. Asp-63 functions as the Proton donor/acceptor in the catalytic mechanism. His-90 lines the substrate pocket.

This sequence belongs to the methylglyoxal synthase family.

It catalyses the reaction dihydroxyacetone phosphate = methylglyoxal + phosphate. Catalyzes the formation of methylglyoxal from dihydroxyacetone phosphate. The polypeptide is Methylglyoxal synthase (Thermoanaerobacterium thermosaccharolyticum (Clostridium thermosaccharolyticum)).